Here is a 403-residue protein sequence, read N- to C-terminus: Argininosuccinate synthase (403 aa).

Position 10-18 (10-18) interacts with ATP; that stretch reads AYSGGLDTS. Residue tyrosine 87 participates in L-citrulline binding. Residue glycine 117 coordinates ATP. The L-aspartate site is built by threonine 119, asparagine 123, and aspartate 124. Asparagine 123 lines the L-citrulline pocket. 4 residues coordinate L-citrulline: arginine 127, serine 175, glutamate 260, and tyrosine 272.

Belongs to the argininosuccinate synthase family. Type 1 subfamily. In terms of assembly, homotetramer.

The protein resides in the cytoplasm. The catalysed reaction is L-citrulline + L-aspartate + ATP = 2-(N(omega)-L-arginino)succinate + AMP + diphosphate + H(+). It participates in amino-acid biosynthesis; L-arginine biosynthesis; L-arginine from L-ornithine and carbamoyl phosphate: step 2/3. This is Argininosuccinate synthase from Bacillus subtilis (strain 168).